Reading from the N-terminus, the 253-residue chain is Ribosomal RNA small subunit methyltransferase I (253 aa).

Over residues 230-246 (RKEQRSQRSFSKGDKKP) the composition is skewed to basic and acidic residues. The segment at 230–253 (RKEQRSQRSFSKGDKKPSFKRFKK) is disordered.

Belongs to the methyltransferase superfamily. RsmI family.

It is found in the cytoplasm. It catalyses the reaction cytidine(1402) in 16S rRNA + S-adenosyl-L-methionine = 2'-O-methylcytidine(1402) in 16S rRNA + S-adenosyl-L-homocysteine + H(+). In terms of biological role, catalyzes the 2'-O-methylation of the ribose of cytidine 1402 (C1402) in 16S rRNA. The sequence is that of Ribosomal RNA small subunit methyltransferase I from Leptospira borgpetersenii serovar Hardjo-bovis (strain L550).